The following is a 636-amino-acid chain: DNA mismatch repair protein MutL (636 aa).

Positions 341 to 420 (APLINKPEQQ…PGAEEYTPEA (80 aa)) are disordered. Residues 348-358 (EQQKLDFDQVR) show a composition bias toward basic and acidic residues.

This sequence belongs to the DNA mismatch repair MutL/HexB family.

This protein is involved in the repair of mismatches in DNA. It is required for dam-dependent methyl-directed DNA mismatch repair. May act as a 'molecular matchmaker', a protein that promotes the formation of a stable complex between two or more DNA-binding proteins in an ATP-dependent manner without itself being part of a final effector complex. This is DNA mismatch repair protein MutL from Bacillus licheniformis (strain ATCC 14580 / DSM 13 / JCM 2505 / CCUG 7422 / NBRC 12200 / NCIMB 9375 / NCTC 10341 / NRRL NRS-1264 / Gibson 46).